Here is a 968-residue protein sequence, read N- to C-terminus: MKKFFDSRREQGGSGLGSGSSGGGGSTSGLGSGYIGRVFGIGRQQVTVDEVLAEGGFAIVFLVRTSNGMKCALKRMFVNNEHDLQVCKREIQIMRDLSGHKNIVGYIDSSINNVSSGDVWEVLILMDFCRGGQVVNLMNQRLQTGFTESEVLQIFCDTCEAVARLHQCKTPIIHRDLKVENILLHDRGHYVLCDFGSATNKFQNPQTEGVNAVEDEIKKYTTLSYRAPEMVNLYSGKIITTKADIWALGCLLYKLCYFTLPFGESQVAICDGNFTIPDNSRYSQDMHCLIRYMLEPDPDKRPDIYQVSFFSFKLLKKECPVPNVQNSPIPAKLPEPVKASEAAAKKTQPKARLTDPIPTTETSIAPRQRPKAGQTQPNPGILPIQPALTPRKRAMVQPPPQVAGSSNQPGLLASVPQPKTQAPPSQPLPQSQAKQPQAPPAPQQPPSAPAQGLPAQAQATPQHQQQLFLKQQPQPPQPQPQAQAPPVKSLKFYPFYPMCKGRQTVSSQFQAVHPAAQQPAIAQFPAVSQGSSQQQLIQNFYQQQQQQQQQQQLATTLHQQQLLTQQAALQQKTTVAAIQPPQAQPATASQPPPAQEPAQIQAPVRQQPKVQTTPPPAIQGQKLGSLTPPSSPKAQRAGHRRILSDVTHSAVFGVPASKSTQLLQAAAAEASLNKSKSATTTPSGSPRASQQNVYNPSEGSTWNPFDDDNFSKLTAEELLNKDFAKLGEGKHPEKLGGSAESLIPGFQPTQGDAFAASSFAAGTAEKRKGGQAVDSSLPLLSVSDPFIPLQVPDAPEKLIEGLKSPDTSLLLPDLLPMTDPFGSTSDAVIEKADVAVESLIPGLEPPVPQRLPSQTESVASNRTDSLTGEDALIDCSLLSNPTTDLLEEFAPIAISAPAHKAAEDSNLISGFDVPEGSDKVAEDEFDPIPVLITKNPQGGHSRNSSGSSESSLPNLARSLLLVDQLIDL.

Methionine 1 is modified (N-acetylmethionine). A compositionally biased stretch (basic and acidic residues) spans 1–11 (MKKFFDSRREQ). The disordered stretch occupies residues 1–25 (MKKFFDSRREQGGSGLGSGSSGGGG). Gly residues predominate over residues 12 to 25 (GGSGLGSGSSGGGG). Serine 14 carries the phosphoserine modification. One can recognise a Protein kinase domain in the interval 46–315 (VTVDEVLAEG…QVSFFSFKLL (270 aa)). Residues 52-60 (LAEGGFAIV) and lysine 74 each bind ATP. The Proton acceptor role is filled by aspartate 176. Tyrosine 234 is modified (phosphotyrosine). A Phosphoserine modification is found at serine 235. 2 disordered regions span residues 327 to 485 (SPIP…AQAP) and 578 to 640 (IQPP…AGHR). A phosphothreonine mark is found at threonine 354 and threonine 389. Arginine 391 carries the omega-N-methylarginine modification. Residues 437-448 (QAPPAPQQPPSA) show a composition bias toward pro residues. Low complexity-rich tracts occupy residues 449-472 (PAQG…LKQQ) and 578-589 (IQPPQAQPATAS). The residue at position 613 (threonine 613) is a Phosphothreonine. Serine 625 is modified (phosphoserine). At threonine 627 the chain carries Phosphothreonine. 4 positions are modified to phosphoserine: serine 630, serine 631, serine 644, and serine 657. Phosphothreonine is present on threonine 660. Residues 671–708 (SLNKSKSATTTPSGSPRASQQNVYNPSEGSTWNPFDDD) form a disordered region. Residues 679 to 703 (TTTPSGSPRASQQNVYNPSEGSTWN) show a composition bias toward polar residues. Phosphotyrosine is present on tyrosine 694. Residues serine 738, serine 853, serine 944, and serine 945 each carry the phosphoserine modification. Residues 830–967 (EKADVAVESL…SLLLVDQLID (138 aa)) are clathrin-binding domain (CBD). 2 disordered regions span residues 843-862 (LEPP…ASNR) and 929-952 (PVLI…ESSL). The segment covering 851–862 (LPSQTESVASNR) has biased composition (polar residues). The span at 938-951 (GGHSRNSSGSSESS) shows a compositional bias: low complexity.

It belongs to the protein kinase superfamily. Ser/Thr protein kinase family. As to quaternary structure, interacts (via CBD domain) with clathrin. Interacts with AP-2 complex. Interacts with NUMB. Interacts with alpha-adaptin. Interacts with EPS15. Interacts with membrane-bound activated NOTCH1 but not with the inactive full-length form of NOTCH1. Preferentially interacts with monoubiquitinated activated NOTCH1 compared to the non-ubiquitinated form. Autophosphorylated.

It localises to the cell membrane. It is found in the membrane. The protein resides in the clathrin-coated pit. The protein localises to the presynapse. It catalyses the reaction L-seryl-[protein] + ATP = O-phospho-L-seryl-[protein] + ADP + H(+). The enzyme catalyses L-threonyl-[protein] + ATP = O-phospho-L-threonyl-[protein] + ADP + H(+). Stimulated by clathrin. Its function is as follows. Regulates clathrin-mediated endocytosis by phosphorylating the AP2M1/mu2 subunit of the adaptor protein complex 2 (AP-2) which ensures high affinity binding of AP-2 to cargo membrane proteins during the initial stages of endocytosis. Preferentially, may phosphorylate substrates on threonine residues. Regulates phosphorylation of other AP-2 subunits as well as AP-2 localization and AP-2-mediated internalization of ligand complexes. Phosphorylates NUMB and regulates its cellular localization, promoting NUMB localization to endosomes. Binds to and stabilizes the activated form of NOTCH1, increases its localization in endosomes and regulates its transcriptional activity. This chain is AP2-associated protein kinase 1 (AAK1), found in Sus scrofa (Pig).